The chain runs to 395 residues: uncharacterized protein (395 aa).

Positions 288–318 form a coiled coil; that stretch reads VAKGKEIDNAEIEKTIKEYENIEEGIEDIVK.

This is an uncharacterized protein from Ostreid herpesvirus 1 (isolate France) (OsHV-1).